A 280-amino-acid chain; its full sequence is Energy-coupling factor transporter ATP-binding protein EcfA2 (280 aa).

Residues 3 to 245 (ISLENVSYTY…VAFLKEKQLG (243 aa)) form the ABC transporter domain. Position 40–47 (40–47 (GHTGSGKS)) interacts with ATP.

This sequence belongs to the ABC transporter superfamily. Energy-coupling factor EcfA family. Forms a stable energy-coupling factor (ECF) transporter complex composed of 2 membrane-embedded substrate-binding proteins (S component), 2 ATP-binding proteins (A component) and 2 transmembrane proteins (T component).

It localises to the cell membrane. In terms of biological role, ATP-binding (A) component of a common energy-coupling factor (ECF) ABC-transporter complex. Unlike classic ABC transporters this ECF transporter provides the energy necessary to transport a number of different substrates. This is Energy-coupling factor transporter ATP-binding protein EcfA2 from Streptococcus thermophilus (strain CNRZ 1066).